A 174-amino-acid chain; its full sequence is Adenine phosphoribosyltransferase (174 aa).

This sequence belongs to the purine/pyrimidine phosphoribosyltransferase family. Homodimer.

Its subcellular location is the cytoplasm. The enzyme catalyses AMP + diphosphate = 5-phospho-alpha-D-ribose 1-diphosphate + adenine. It participates in purine metabolism; AMP biosynthesis via salvage pathway; AMP from adenine: step 1/1. Catalyzes a salvage reaction resulting in the formation of AMP, that is energically less costly than de novo synthesis. This Mycobacterium sp. (strain JLS) protein is Adenine phosphoribosyltransferase.